Reading from the N-terminus, the 505-residue chain is MVLITLTLVSLVVGLLYAVLVWNYDYWRKRGVPGPKPKLLCGNYPNMFTMKRHAIYDLDDIYRQYKNKYDAVGIFGSRSPQLLVINPALARRVFVSNFKNFHDNEIAKNIDEKTDFIFANNPFSLTGEKWKTRRADVTPGLTMGRIKTVYPVTNKVCQKLTEWVEKQLRLGSKDGIDAKHMSLCFTTEMVTDCVLGLGAESFSDKPTPIMSKINDLFNQPWTFVLFFILTSSFPSLSHLIKLRFVPVDVERFFVDLMGSAVETRRAQLAAGKQFERSDFLDYILQLGEKRNLDNRQLLAYSMTFLLDGFETTATVLAHILLNLGRNKEAQNLLREEIRSHLQDGTIAFEKLSDLPYLDACVQETIRLFPPGFMSNKLCTESIEIPNKEGPNFVVEKGTTVVVPHYCFMLDEEFFPNPQSFQPERFLEPDAAKTFRERGVFMGFGDGPRVCIGMRFATVQIKAAIVELISKFNVKINDKTRKDNDYEPGQIITGLRGGIWLDLEKL.

Residue Cys-450 coordinates heme.

The protein belongs to the cytochrome P450 family. The cofactor is heme.

The protein resides in the endoplasmic reticulum membrane. The protein localises to the microsome membrane. In terms of biological role, may be involved in the metabolism of insect hormones and in the breakdown of synthetic insecticides. The protein is Probable cytochrome P450 28a5 (Cyp28a5) of Drosophila melanogaster (Fruit fly).